The chain runs to 124 residues: Large ribosomal subunit protein bL12 (124 aa).

Belongs to the bacterial ribosomal protein bL12 family. Homodimer. Part of the ribosomal stalk of the 50S ribosomal subunit. Forms a multimeric L10(L12)X complex, where L10 forms an elongated spine to which 2 to 4 L12 dimers bind in a sequential fashion. Binds GTP-bound translation factors.

Functionally, forms part of the ribosomal stalk which helps the ribosome interact with GTP-bound translation factors. Is thus essential for accurate translation. The polypeptide is Large ribosomal subunit protein bL12 (Chlorobium chlorochromatii (strain CaD3)).